The chain runs to 430 residues: Methylthioribose kinase 1 (430 aa).

ATP-binding positions include 52–56 (DGNLN), lysine 71, and 125–127 (RYI). Asparagine 56 serves as a coordination point for substrate. Position 246 (aspartate 246) interacts with substrate. 263 to 265 (DPE) provides a ligand contact to ATP. Residue arginine 373 participates in substrate binding.

Belongs to the methylthioribose kinase family. Homodimer.

It catalyses the reaction 5-(methylsulfanyl)-D-ribose + ATP = 5-(methylsulfanyl)-alpha-D-ribose 1-phosphate + ADP + H(+). It participates in amino-acid biosynthesis; L-methionine biosynthesis via salvage pathway; S-methyl-5-thio-alpha-D-ribose 1-phosphate from S-methyl-5'-thioadenosine (hydrolase route): step 2/2. Catalyzes the phosphorylation of methylthioribose into methylthioribose-1-phosphate. This is Methylthioribose kinase 1 from Oryza sativa subsp. japonica (Rice).